A 401-amino-acid polypeptide reads, in one-letter code: Phosphoglycerate kinase (401 aa).

Residues 24–26, R40, 63–66, R122, and R155 contribute to the substrate site; these read DFN and HFGR. ATP contacts are provided by residues K206, G297, E328, and 357–360; that span reads GGDS.

The protein belongs to the phosphoglycerate kinase family. Monomer.

Its subcellular location is the cytoplasm. The enzyme catalyses (2R)-3-phosphoglycerate + ATP = (2R)-3-phospho-glyceroyl phosphate + ADP. The protein operates within carbohydrate degradation; glycolysis; pyruvate from D-glyceraldehyde 3-phosphate: step 2/5. The chain is Phosphoglycerate kinase from Acaryochloris marina (strain MBIC 11017).